Reading from the N-terminus, the 304-residue chain is D-alanine--D-alanine ligase (304 aa).

The 197-residue stretch at Lys103–Lys299 folds into the ATP-grasp domain. Glu129–Ser184 contributes to the ATP binding site. Residues Asp253, Glu266, and Asn268 each coordinate Mg(2+).

Belongs to the D-alanine--D-alanine ligase family. Mg(2+) is required as a cofactor. Requires Mn(2+) as cofactor.

The protein localises to the cytoplasm. It catalyses the reaction 2 D-alanine + ATP = D-alanyl-D-alanine + ADP + phosphate + H(+). It functions in the pathway cell wall biogenesis; peptidoglycan biosynthesis. Cell wall formation. The sequence is that of D-alanine--D-alanine ligase from Neisseria meningitidis serogroup C / serotype 2a (strain ATCC 700532 / DSM 15464 / FAM18).